A 438-amino-acid chain; its full sequence is 23S rRNA (uracil(1939)-C(5))-methyltransferase RlmD (438 aa).

One can recognise a TRAM domain in the interval 10–69 (KASVNTKHLSVDVVRLDHNSAGIAFVDKKPVFIEGALPEEQAIIQFIEQKKQYSRAKLIK). 4 residues coordinate [4Fe-4S] cluster: Cys82, Cys88, Cys91, and Cys169. The S-adenosyl-L-methionine site is built by Gln272, Phe301, Asn306, Glu322, Asn349, and Asp370. Catalysis depends on Cys396, which acts as the Nucleophile.

Belongs to the class I-like SAM-binding methyltransferase superfamily. RNA M5U methyltransferase family. RlmD subfamily.

It catalyses the reaction uridine(1939) in 23S rRNA + S-adenosyl-L-methionine = 5-methyluridine(1939) in 23S rRNA + S-adenosyl-L-homocysteine + H(+). Functionally, catalyzes the formation of 5-methyl-uridine at position 1939 (m5U1939) in 23S rRNA. This is 23S rRNA (uracil(1939)-C(5))-methyltransferase RlmD from Aliivibrio salmonicida (strain LFI1238) (Vibrio salmonicida (strain LFI1238)).